The primary structure comprises 80 residues: Large ribosomal subunit protein bL31B (80 aa).

It belongs to the bacterial ribosomal protein bL31 family. Type B subfamily. As to quaternary structure, part of the 50S ribosomal subunit.

This Exiguobacterium sp. (strain ATCC BAA-1283 / AT1b) protein is Large ribosomal subunit protein bL31B.